The primary structure comprises 332 residues: DNA-directed RNA polymerase subunit alpha (332 aa).

The interval 1–226 is alpha N-terminal domain (alpha-NTD); that stretch reads MLIAQRPTLT…ELFGLCRELN (226 aa). An alpha C-terminal domain (alpha-CTD) region spans residues 245 to 332; that stretch reads PEMNIPIEDL…GGTFFSPEDE (88 aa).

It belongs to the RNA polymerase alpha chain family. Homodimer. The RNAP catalytic core consists of 2 alpha, 1 beta, 1 beta' and 1 omega subunit. When a sigma factor is associated with the core the holoenzyme is formed, which can initiate transcription.

The catalysed reaction is RNA(n) + a ribonucleoside 5'-triphosphate = RNA(n+1) + diphosphate. Functionally, DNA-dependent RNA polymerase catalyzes the transcription of DNA into RNA using the four ribonucleoside triphosphates as substrates. The sequence is that of DNA-directed RNA polymerase subunit alpha from Bifidobacterium adolescentis (strain ATCC 15703 / DSM 20083 / NCTC 11814 / E194a).